We begin with the raw amino-acid sequence, 398 residues long: Tyrosine--tRNA ligase (398 aa).

The 'HIGH' region motif lies at 42–51 (PTAPDIHLGH). The short motif at 226–230 (KMSKS) is the 'KMSKS' region element. Lys-229 lines the ATP pocket. Residues 336 to 397 (LAIANLLKDA…GKRKFAKVTL (62 aa)) enclose the S4 RNA-binding domain.

Belongs to the class-I aminoacyl-tRNA synthetase family. TyrS type 2 subfamily. As to quaternary structure, homodimer.

It localises to the cytoplasm. The enzyme catalyses tRNA(Tyr) + L-tyrosine + ATP = L-tyrosyl-tRNA(Tyr) + AMP + diphosphate + H(+). In terms of biological role, catalyzes the attachment of tyrosine to tRNA(Tyr) in a two-step reaction: tyrosine is first activated by ATP to form Tyr-AMP and then transferred to the acceptor end of tRNA(Tyr). The polypeptide is Tyrosine--tRNA ligase (Shewanella oneidensis (strain ATCC 700550 / JCM 31522 / CIP 106686 / LMG 19005 / NCIMB 14063 / MR-1)).